We begin with the raw amino-acid sequence, 143 residues long: MSIIKEFKEFAVKGNVMDLAVGVIIGGAFSKIVDSVVKDLIMPVIGVLTGGLDFSNKFVLLGTVPASFKGNPDSFKDLQAAGVAVFGYGSFITVLINFIILAFIIFLMVKFINKLRKPAEAAPAATPEDIVLLREIRDSLKQR.

2 helical membrane-spanning segments follow: residues 10-30 (FAVK…GAFS) and 89-109 (GSFI…FLMV).

Belongs to the MscL family. In terms of assembly, homopentamer.

The protein localises to the cell inner membrane. Channel that opens in response to stretch forces in the membrane lipid bilayer. May participate in the regulation of osmotic pressure changes within the cell. The polypeptide is Large-conductance mechanosensitive channel (Burkholderia multivorans (strain ATCC 17616 / 249)).